The following is a 484-amino-acid chain: MPGTSVSDLSTATAVDAPALLPLPVARPSAPAVVRGKLYIKTHGCQMNEYDSAKMADVLAASEGLELTDNPEEADVVLVNTCSIREKAQEKVFSQLGRWKALKAGGKPVIIGVGGCVASQEGEAIVKRAPYVDLVFGPQTLHRLPELIRARRESGKSQVDISFPEIEKFDRLPEPRAEGPSAFVSIMEGCSKYCSFCVVPYTRGEEVSRPFEDVLVEVAQLAAQGVREINLLGQNVNAYRGAYGADAGDPAQYADLGLLIRTIAQIEGIGRIRFTTSHPLEFSDSLVDAYRDVPQLANYLHLPVQAGSDRILSAMKRGYTALEFKSRIRKLRAVRPDISISSDFIVGFPGETEADFEKTMKLIEDVGFDQSFSFVYSRRPGTPASDLQDDTPETVKQARLARLQAHISAHAASISQSMVGSVQRVLVEGPSRRDPNELTGKSENMRPVNFPGNPRLIGQFVDVLITEAMSNSLRGRIQLDDSAH.

The MTTase N-terminal domain occupies 36-153 (GKLYIKTHGC…LPELIRARRE (118 aa)). [4Fe-4S] cluster is bound by residues cysteine 45, cysteine 82, cysteine 116, cysteine 190, cysteine 194, and cysteine 197. Residues 176-415 (RAEGPSAFVS…HISAHAASIS (240 aa)) form the Radical SAM core domain. The TRAM domain occupies 416 to 479 (QSMVGSVQRV…SNSLRGRIQL (64 aa)). The interval 428 to 450 (EGPSRRDPNELTGKSENMRPVNF) is disordered.

It belongs to the methylthiotransferase family. MiaB subfamily. Monomer. The cofactor is [4Fe-4S] cluster.

The protein localises to the cytoplasm. It carries out the reaction N(6)-dimethylallyladenosine(37) in tRNA + (sulfur carrier)-SH + AH2 + 2 S-adenosyl-L-methionine = 2-methylsulfanyl-N(6)-dimethylallyladenosine(37) in tRNA + (sulfur carrier)-H + 5'-deoxyadenosine + L-methionine + A + S-adenosyl-L-homocysteine + 2 H(+). Functionally, catalyzes the methylthiolation of N6-(dimethylallyl)adenosine (i(6)A), leading to the formation of 2-methylthio-N6-(dimethylallyl)adenosine (ms(2)i(6)A) at position 37 in tRNAs that read codons beginning with uridine. This Xanthomonas oryzae pv. oryzae (strain KACC10331 / KXO85) protein is tRNA-2-methylthio-N(6)-dimethylallyladenosine synthase.